Reading from the N-terminus, the 656-residue chain is CXXC-type zinc finger protein 1 (656 aa).

Methionine 1 is subject to N-acetylmethionine. Acidic residues predominate over residues 1 to 14 (MEGDGSDPEPPDAG). Positions 1–20 (MEGDGSDPEPPDAGEDSKSE) are disordered. Serine 6 and serine 19 each carry phosphoserine. A PHD-type zinc finger spans residues 28-76 (YCICRKPDINCFMIGCDNCNEWFHGDCIRITEKMAKAIREWYCRECREK). Residues 84–162 (YRHKKSRERD…QHHQQQQQQI (79 aa)) form a disordered region. The segment covering 90–120 (RERDGNERDSSEPRDEGGGRKRPVPDPDLQR) has biased composition (basic and acidic residues). Residue serine 124 is modified to Phosphoserine. The CXXC-type zinc finger occupies 160–209 (QQIKRSARMCGECEACRRTEDCGHCDFCRDMKKFGGPNKIRQKCRLRQCQ). Cysteine 169, cysteine 172, cysteine 175, cysteine 181, cysteine 184, cysteine 187, cysteine 203, and cysteine 208 together coordinate Zn(2+). 2 disordered regions span residues 219–287 (FPSS…LPLD) and 311–373 (EESP…ASLP). At serine 224 the chain carries Phosphoserine. At threonine 227 the chain carries Phosphothreonine. Low complexity predominate over residues 239–249 (LPTQQQPQPSQ). Residue lysine 250 forms a Glycyl lysine isopeptide (Lys-Gly) (interchain with G-Cter in SUMO2) linkage. The segment covering 321–334 (RKRAVKVKHVKRRE) has biased composition (basic residues). A compositionally biased stretch (basic and acidic residues) spans 335–345 (KKSEKKKEERY). Positions 346–358 (KRHRQKQKHKDKW) are enriched in basic residues. Residues 359 to 368 (KHPERADAKD) show a composition bias toward basic and acidic residues. Residues 422–474 (AEEHGKKLLERIRREQQSARTRLQEMERRFHELEAIILRAKQQAVREDEESNE) adopt a coiled-coil conformation.

As to quaternary structure, component of the SET1 complex, at least composed of the catalytic subunit (SETD1A or SETD1B), WDR5, WDR82, RBBP5, ASH2L/ASH2, CXXC1/CFP1 HCFC1 and DPY30. Interacts with SETD1A. Interacts with ZNF335. Interacts with PRDM9; this interaction does not link PRDM9-activated recombination hotspot sites with DSB machinery and is not required for the hotspot recognition pathway. Interacts with histone H3K4me3. Post-translationally, may be regulated by proteolysis. Ubiquitous.

It is found in the nucleus speckle. It localises to the nucleus. In terms of biological role, transcriptional activator that exhibits a unique DNA binding specificity for CpG unmethylated motifs with a preference for CpGG. This is CXXC-type zinc finger protein 1 (CXXC1) from Homo sapiens (Human).